Consider the following 704-residue polypeptide: Elongation factor G (704 aa).

A tr-type G domain is found at 8–290; the sequence is ARYRNIGISA…AVIDYLPSPV (283 aa). GTP contacts are provided by residues 17-24, 88-92, and 142-145; these read AHIDAGKT, DTPGH, and NKMD.

This sequence belongs to the TRAFAC class translation factor GTPase superfamily. Classic translation factor GTPase family. EF-G/EF-2 subfamily.

It localises to the cytoplasm. Its function is as follows. Catalyzes the GTP-dependent ribosomal translocation step during translation elongation. During this step, the ribosome changes from the pre-translocational (PRE) to the post-translocational (POST) state as the newly formed A-site-bound peptidyl-tRNA and P-site-bound deacylated tRNA move to the P and E sites, respectively. Catalyzes the coordinated movement of the two tRNA molecules, the mRNA and conformational changes in the ribosome. This Cronobacter sakazakii (strain ATCC BAA-894) (Enterobacter sakazakii) protein is Elongation factor G.